The sequence spans 94 residues: Large ribosomal subunit protein bL25 (94 aa).

Belongs to the bacterial ribosomal protein bL25 family. In terms of assembly, part of the 50S ribosomal subunit; part of the 5S rRNA/L5/L18/L25 subcomplex. Contacts the 5S rRNA. Binds to the 5S rRNA independently of L5 and L18.

In terms of biological role, this is one of the proteins that binds to the 5S RNA in the ribosome where it forms part of the central protuberance. The chain is Large ribosomal subunit protein bL25 from Pectobacterium carotovorum subsp. carotovorum (strain PC1).